Consider the following 222-residue polypeptide: LHFPL tetraspan subfamily member 3 protein (222 aa).

Transmembrane regions (helical) follow at residues 22-42 (IGVL…VCFI), 96-116 (FFIG…TLFF), 126-146 (ICAW…MIFP), and 177-197 (ILAI…VVLG).

Belongs to the LHFP family. As to expression, brain-specific.

It is found in the membrane. This is LHFPL tetraspan subfamily member 3 protein from Mus musculus (Mouse).